The sequence spans 404 residues: Argininosuccinate synthase (404 aa).

ATP contacts are provided by residues 10 to 18 (AYSGGVDTS) and Ala-38. Tyr-89 serves as a coordination point for L-citrulline. Residue Gly-119 participates in ATP binding. Positions 121, 125, and 126 each coordinate L-aspartate. Asn-125 contributes to the L-citrulline binding site. L-citrulline-binding residues include Arg-129, Ser-177, Ser-186, Glu-262, and Tyr-274.

Belongs to the argininosuccinate synthase family. Type 1 subfamily. In terms of assembly, homotetramer.

The protein localises to the cytoplasm. It carries out the reaction L-citrulline + L-aspartate + ATP = 2-(N(omega)-L-arginino)succinate + AMP + diphosphate + H(+). It functions in the pathway amino-acid biosynthesis; L-arginine biosynthesis; L-arginine from L-ornithine and carbamoyl phosphate: step 2/3. The polypeptide is Argininosuccinate synthase (Prochlorococcus marinus (strain MIT 9301)).